Consider the following 318-residue polypeptide: 2-keto-3-deoxygluconate permease (318 aa).

Transmembrane regions (helical) follow at residues 10 to 30 (LPGG…TLWP), 42 to 62 (GLIS…GATI), 82 to 102 (IAVA…GGIP), 109 to 129 (LSVL…YAAL), 139 to 159 (AGAV…LILG), 163 to 183 (LATF…LGFA), 201 to 221 (TLVP…TIVH), 224 to 244 (ASGV…LLLA), 257 to 277 (VAAS…AGMA), and 288 to 308 (TALV…LTAL).

This sequence belongs to the KdgT transporter family.

Its subcellular location is the cell inner membrane. It carries out the reaction 2-dehydro-3-deoxy-D-gluconate(in) + H(+)(in) = 2-dehydro-3-deoxy-D-gluconate(out) + H(+)(out). In terms of biological role, catalyzes the proton-dependent uptake of 2-keto-3-deoxygluconate (KDG) into the cell. The chain is 2-keto-3-deoxygluconate permease from Xanthomonas oryzae pv. oryzae (strain MAFF 311018).